The primary structure comprises 325 residues: Beta-ketoacyl-[acyl-carrier-protein] synthase III (325 aa).

Catalysis depends on residues C116 and H252. An ACP-binding region spans residues 253–257; sequence QANLR. Residue N282 is part of the active site.

This sequence belongs to the thiolase-like superfamily. FabH family. Homodimer.

It localises to the cytoplasm. It carries out the reaction malonyl-[ACP] + acetyl-CoA + H(+) = 3-oxobutanoyl-[ACP] + CO2 + CoA. The protein operates within lipid metabolism; fatty acid biosynthesis. In terms of biological role, catalyzes the condensation reaction of fatty acid synthesis by the addition to an acyl acceptor of two carbons from malonyl-ACP. Catalyzes the first condensation reaction which initiates fatty acid synthesis and may therefore play a role in governing the total rate of fatty acid production. Possesses both acetoacetyl-ACP synthase and acetyl transacylase activities. Its substrate specificity determines the biosynthesis of branched-chain and/or straight-chain of fatty acids. The polypeptide is Beta-ketoacyl-[acyl-carrier-protein] synthase III (Xanthomonas euvesicatoria pv. vesicatoria (strain 85-10) (Xanthomonas campestris pv. vesicatoria)).